Reading from the N-terminus, the 236-residue chain is ATP synthase subunit a, chloroplastic (236 aa).

5 consecutive transmembrane segments (helical) span residues 25-45, 87-107, 123-143, 180-202, and 210-230; these read MHGQ…AFAV, FIGT…LIPW, DINT…YAGL, LFGN…PLVI, and GLFT…AYIG.

It belongs to the ATPase A chain family. As to quaternary structure, F-type ATPases have 2 components, CF(1) - the catalytic core - and CF(0) - the membrane proton channel. CF(1) has five subunits: alpha(3), beta(3), gamma(1), delta(1), epsilon(1). CF(0) has four main subunits: a, b, b' and c.

The protein resides in the plastid. The protein localises to the chloroplast thylakoid membrane. Functionally, key component of the proton channel; it plays a direct role in the translocation of protons across the membrane. This chain is ATP synthase subunit a, chloroplastic, found in Ostreococcus tauri.